A 432-amino-acid polypeptide reads, in one-letter code: METITISEVPKHVGETVKIGVWLTDKRSSGKIAFLQLRDGTGFFQGIIRKNDVSEEKFDSAKHDLHQETSFWVTGEIAEDKRSKFGYEIHIKDFDIVGESEDYPIGNKEHGIDFLLDNRHLWLRSRKPWALMRIRSRVKLATMEFFEKHGFTQFDAPELTGSAPEGTTELFETDYFDRSAFLSQSGQLYAEAGAMALGRVYTMGPTFRAEKSKTRRHLMEFWMIEPEMAWMHQDESLKIQEQYIAYLVQDLIDHCARELEMVGRSVESLKPFTELPYPRITYKEAIEILQKGGFDVEYGADFGSPEETYLADQFQKPVFILNYPKEIKAFYMPEDPEDSRQVICADLLAPEGYGEIIGGSERSYDYEYITNKLEENGLSKEDYGWYDDLRKYGSIPHSGFGMGLERFLAWITLQDHIRETIPFPRMLNRLNP.

This sequence belongs to the class-II aminoacyl-tRNA synthetase family. Homodimer.

It localises to the cytoplasm. It carries out the reaction tRNA(Asn) + L-asparagine + ATP = L-asparaginyl-tRNA(Asn) + AMP + diphosphate + H(+). The chain is Asparagine--tRNA ligase from Limosilactobacillus reuteri (strain DSM 20016) (Lactobacillus reuteri).